A 688-amino-acid polypeptide reads, in one-letter code: Potassium-transporting ATPase ATP-binding subunit (688 aa).

The next 4 helical transmembrane spans lie at 34-54 (PVMF…LAIL), 62-82 (AMFT…ANMA), 219-239 (VALT…TATL), and 260-280 (VLVA…LSAI). Catalysis depends on Asp-313, which acts as the 4-aspartylphosphate intermediate. ATP is bound by residues Asp-350, Glu-354, 383 to 390 (FSAQTRMS), and Lys-401. The Mg(2+) site is built by Asp-524 and Asp-528. Transmembrane regions (helical) follow at residues 594-614 (FAII…LNIM), 622-642 (AILS…PLAL), and 662-682 (IYGL…DLLL).

It belongs to the cation transport ATPase (P-type) (TC 3.A.3) family. Type IA subfamily. The system is composed of three essential subunits: KdpA, KdpB and KdpC.

It is found in the cell inner membrane. It catalyses the reaction K(+)(out) + ATP + H2O = K(+)(in) + ADP + phosphate + H(+). Part of the high-affinity ATP-driven potassium transport (or Kdp) system, which catalyzes the hydrolysis of ATP coupled with the electrogenic transport of potassium into the cytoplasm. This subunit is responsible for energy coupling to the transport system and for the release of the potassium ions to the cytoplasm. The polypeptide is Potassium-transporting ATPase ATP-binding subunit (Yersinia pseudotuberculosis serotype O:1b (strain IP 31758)).